A 1035-amino-acid chain; its full sequence is Integrin alpha-9 (1035 aa).

An N-terminal signal peptide occupies residues 1-29 (MGGPAAPRGAGRLRALLLALVVAGIPAGA). Residues 30–981 (YNLDPQRPVH…LEPRGYVVGW (952 aa)) lie on the Extracellular side of the membrane. FG-GAP repeat units follow at residues 35–96 (QRPV…PDRR), 111–174 (SCGK…AKGR), 182–232 (EYKK…NTYL), 233–289 (KLND…SGTL), 290–349 (IKIF…GALE), 351–408 (QLAL…GIVP), and 411–474 (SMKL…LPGS). Intrachain disulfides connect C87–C97, C142–C162, and C179–C194. N225 carries N-linked (GlcNAc...) asparagine glycosylation. D312, N314, D316, D320, D373, D375, D377, D381, D435, D437, N439, and D443 together coordinate Ca(2+). N-linked (GlcNAc...) asparagine glycosylation occurs at N476. An intrachain disulfide couples C482 to C491. N-linked (GlcNAc...) asparagine glycosylation is present at N493. An intrachain disulfide couples C497 to C555. N612 is a glycosylation site (N-linked (GlcNAc...) asparagine). C620 and C625 are joined by a disulfide. N654, N658, N672, and N676 each carry an N-linked (GlcNAc...) asparagine glycan. A disulfide bridge connects residues C696 and C706. N807 and N854 each carry an N-linked (GlcNAc...) asparagine glycan. Intrachain disulfides connect C855–C891 and C898–C903. N904 carries N-linked (GlcNAc...) asparagine glycosylation. A helical membrane pass occupies residues 982-1002 (IIAISLLVGILIFLLLAVLLW). Residues 1003–1035 (KMGFFRRRYKEIIEAEKNRKENEDSWDWVQKNQ) lie on the Cytoplasmic side of the membrane. Residues 1005–1009 (GFFRR) carry the GFFKR motif motif.

It belongs to the integrin alpha chain family. As to quaternary structure, heterodimer of an alpha and a beta subunit. Alpha-9 (ITGA9) associates with beta-1 (ITGB1). Integrin ITGA9:ITGB1 interacts with FBLN5 (via N-terminus). Integrin ITGA9:ITGB1 interacts with SPP1/OPN (via N-terminus). Integrin ITGA9:ITGB1 interacts with TNC/TNFN3 (via the 3rd Fibronectin type-III domain). Integrin ITGA9:ITGB1 interacts with SVEP1/polydom (via Sushi domain 21); thereby inhibits Ca(2+) intracellular signaling and as a result represses vasocontraction. Expressed in vascular smooth muscle cells (at protein level). Expressed in the airway epithelium (at protein level).

It is found in the membrane. In terms of biological role, integrin alpha-9/beta-1 (ITGA9:ITGB1) is a receptor for VCAM1, cytotactin and osteopontin. It recognizes the sequence A-E-I-D-G-I-E-L in cytotactin. ITGA9:ITGB1 may play a crucial role in SVEP1/polydom-mediated myoblast cell adhesion. Integrin ITGA9:ITGB1 represses PRKCA-mediated L-type voltage-gated channel Ca(2+) influx and ROCK-mediated calcium sensitivity in vascular smooth muscle cells via its interaction with SVEP1, thereby inhibiting vasocontraction. The chain is Integrin alpha-9 (ITGA9) from Homo sapiens (Human).